Reading from the N-terminus, the 488-residue chain is Cobyric acid synthase (488 aa).

The 191-residue stretch at 252–442 folds into the GATase cobBQ-type domain; that stretch reads RTRICVPILP…VHGLFASDAF (191 aa). C334 functions as the Nucleophile in the catalytic mechanism. H434 is a catalytic residue.

It belongs to the CobB/CobQ family. CobQ subfamily.

The protein operates within cofactor biosynthesis; adenosylcobalamin biosynthesis. In terms of biological role, catalyzes amidations at positions B, D, E, and G on adenosylcobyrinic A,C-diamide. NH(2) groups are provided by glutamine, and one molecule of ATP is hydrogenolyzed for each amidation. This is Cobyric acid synthase from Xanthobacter autotrophicus (strain ATCC BAA-1158 / Py2).